Here is a 461-residue protein sequence, read N- to C-terminus: Elongation factor 1-alpha, oocyte form (461 aa).

Gly-2 is subject to N,N,N-trimethylglycine. In terms of domain architecture, tr-type G spans 5 to 242 (KIHINIVVIG…DCIIPPQRPT (238 aa)). Residues 14 to 21 (GHVDSGKS) are G1. A GTP-binding site is contributed by 14–21 (GHVDSGKS). Residues 70–74 (GITID) are G2. Residues 91-94 (DAPG) are G3. Residues 91-95 (DAPGH) and 153-156 (NKMD) contribute to the GTP site. Residues 153-156 (NKMD) are G4. Positions 194–196 (SGW) are G5. Glu-301 and Glu-374 each carry 5-glutamyl glycerylphosphorylethanolamine.

It belongs to the TRAFAC class translation factor GTPase superfamily. Classic translation factor GTPase family. EF-Tu/EF-1A subfamily. As to expression, oocyte.

Its subcellular location is the cytoplasm. Functionally, this protein promotes the GTP-dependent binding of aminoacyl-tRNA to the A-site of ribosomes during protein biosynthesis. The polypeptide is Elongation factor 1-alpha, oocyte form (eef1ao) (Xenopus laevis (African clawed frog)).